Consider the following 748-residue polypeptide: Pentatricopeptide repeat-containing protein At3g13880 (748 aa).

17 PPR repeats span residues 46 to 80 (DSEG…SLNP), 81 to 111 (CLYL…MPER), 112 to 146 (NIIS…NLKL), 147 to 181 (DKFT…GLSQ), 182 to 212 (QVFL…CDER), 213 to 247 (DQVS…GLNL), 248 to 285 (TTYA…GMEF), 286 to 316 (DIVV…MPSK), 317 to 356 (NVVT…GLEP), 357 to 391 (SPST…NFQS), 392 to 422 (DEFI…TSKQ), 423 to 457 (DIAS…HIRP), 458 to 492 (EEYT…GIDA), 493 to 523 (FTSV…VQNP), 524 to 558 (DVAT…GIKP), 559 to 589 (NQQA…MKND), and 595 to 629 (NEKH…DHPV). Positions 630-705 (TWRALLSSCR…EPALSWIVIG (76 aa)) are type E motif. The segment at 706–736 (NQTHSFAVADLSHPSSQMIYTMLETMDNVDF) is type E(+) motif.

The protein belongs to the PPR family. PCMP-E subfamily.

The protein is Pentatricopeptide repeat-containing protein At3g13880 (PCMP-E89) of Arabidopsis thaliana (Mouse-ear cress).